The chain runs to 396 residues: Dual specificity mitogen-activated protein kinase kinase dSOR1 (396 aa).

The tract at residues 25 to 44 (APTPPFKTPSGTDTHSLLGK) is disordered. Residues 87–364 (LEKLGELGSG…LKTLLSHPWI (278 aa)) form the Protein kinase domain. Residues 93 to 101 (LGSGNGGVV) and lysine 116 contribute to the ATP site. Catalysis depends on aspartate 209, which acts as the Proton acceptor. Phosphoserine; by RAF is present on residues serine 237 and serine 241.

The protein belongs to the protein kinase superfamily. STE Ser/Thr protein kinase family. MAP kinase kinase subfamily. In terms of assembly, interacts with Raf and ksr; Dsor1 binding to ksr probably promotes ksr and Raf dimerization and ksr-mediated Raf transactivation. Phosphorylation on Ser/Thr by MAP kinase kinase kinases regulates positively the kinase activity.

It catalyses the reaction L-seryl-[protein] + ATP = O-phospho-L-seryl-[protein] + ADP + H(+). The catalysed reaction is L-threonyl-[protein] + ATP = O-phospho-L-threonyl-[protein] + ADP + H(+). The enzyme catalyses L-tyrosyl-[protein] + ATP = O-phospho-L-tyrosyl-[protein] + ADP + H(+). Required downstream of Raf in the sevenless (sev), torso (tor), and Drosophila EGF receptor homolog (DER) signal transduction pathways. Involved in both positive regulation (at the posterior terminus) and negative regulation (at the anterior domain) of tll, as in other terminal class gene products, maybe via the ERK-A kinase. The polypeptide is Dual specificity mitogen-activated protein kinase kinase dSOR1 (Dsor1) (Drosophila melanogaster (Fruit fly)).